A 293-amino-acid polypeptide reads, in one-letter code: Histamine N-methyltransferase (293 aa).

Glu-28 serves as a coordination point for substrate. 5 residues coordinate S-adenosyl-L-methionine: Gly-60, Glu-89, Gln-94, Ser-120, and Ile-142. Asn-283 is a substrate binding site.

This sequence belongs to the class I-like SAM-binding methyltransferase superfamily. HNMT family. As to quaternary structure, monomer.

It localises to the cytoplasm. The enzyme catalyses histamine + S-adenosyl-L-methionine = N(tau)-methylhistamine + S-adenosyl-L-homocysteine + H(+). Functionally, inactivates histamine by N-methylation. Plays an important role in degrading histamine and in regulating the airway response to histamine. This Xenopus tropicalis (Western clawed frog) protein is Histamine N-methyltransferase (hnmt).